The primary structure comprises 644 residues: Ribonuclease R (644 aa).

Residues 211 to 529 (RINYSHIPFI…LHRLLKELLF (319 aa)) form the RNB domain. The S1 motif domain maps to 573 to 644 (LEFLEKEFLG…ITERIKEHVS (72 aa)).

The protein belongs to the RNR ribonuclease family. RNase R subfamily.

Its subcellular location is the cytoplasm. It catalyses the reaction Exonucleolytic cleavage in the 3'- to 5'-direction to yield nucleoside 5'-phosphates.. 3'-5' exoribonuclease that releases 5'-nucleoside monophosphates and is involved in maturation of structured RNAs. This is Ribonuclease R from Helicobacter pylori (strain J99 / ATCC 700824) (Campylobacter pylori J99).